Here is a 1290-residue protein sequence, read N- to C-terminus: DNA-directed RNA polymerase subunit beta' (1290 aa).

The Zn(2+) site is built by Cys-60, Cys-62, Cys-75, and Cys-78. Residues Asp-535, Asp-537, and Asp-539 each coordinate Mg(2+). Zn(2+) is bound by residues Cys-875, Cys-953, Cys-960, and Cys-963.

This sequence belongs to the RNA polymerase beta' chain family. As to quaternary structure, the RNAP catalytic core consists of 2 alpha, 1 beta, 1 beta' and 1 omega subunit. When a sigma factor is associated with the core the holoenzyme is formed, which can initiate transcription. The cofactor is Mg(2+). Requires Zn(2+) as cofactor.

It catalyses the reaction RNA(n) + a ribonucleoside 5'-triphosphate = RNA(n+1) + diphosphate. Its function is as follows. DNA-dependent RNA polymerase catalyzes the transcription of DNA into RNA using the four ribonucleoside triphosphates as substrates. The sequence is that of DNA-directed RNA polymerase subunit beta' from Nocardioides sp. (strain ATCC BAA-499 / JS614).